Reading from the N-terminus, the 201-residue chain is ATP synthase subunit b 2 (201 aa).

The segment covering Met-1–Thr-17 has biased composition (polar residues). The tract at residues Met-1–Ala-39 is disordered. The helical transmembrane segment at Thr-47–Met-66 threads the bilayer.

This sequence belongs to the ATPase B chain family. As to quaternary structure, F-type ATPases have 2 components, F(1) - the catalytic core - and F(0) - the membrane proton channel. F(1) has five subunits: alpha(3), beta(3), gamma(1), delta(1), epsilon(1). F(0) has three main subunits: a(1), b(2) and c(10-14). The alpha and beta chains form an alternating ring which encloses part of the gamma chain. F(1) is attached to F(0) by a central stalk formed by the gamma and epsilon chains, while a peripheral stalk is formed by the delta and b chains.

Its subcellular location is the cell inner membrane. F(1)F(0) ATP synthase produces ATP from ADP in the presence of a proton or sodium gradient. F-type ATPases consist of two structural domains, F(1) containing the extramembraneous catalytic core and F(0) containing the membrane proton channel, linked together by a central stalk and a peripheral stalk. During catalysis, ATP synthesis in the catalytic domain of F(1) is coupled via a rotary mechanism of the central stalk subunits to proton translocation. Functionally, component of the F(0) channel, it forms part of the peripheral stalk, linking F(1) to F(0). The b'-subunit is a diverged and duplicated form of b found in plants and photosynthetic bacteria. This Methylorubrum extorquens (strain PA1) (Methylobacterium extorquens) protein is ATP synthase subunit b 2 (atpF2).